Consider the following 284-residue polypeptide: GPN-loop GTPase 3 (284 aa).

Position 13–18 (13–18) interacts with GTP; that stretch reads GSGKST. A Gly-Pro-Asn (GPN)-loop; involved in dimer interface motif is present at residues 72–74; that stretch reads GPN. 174–177 is a binding site for GTP; that stretch reads TKMD.

Belongs to the GPN-loop GTPase family. In terms of assembly, heterodimer with GPN1. Binds to RNA polymerase II (RNAPII). Interacts directly with subunits RPB4 and RPB7 and the CTD of RPB1.

In terms of biological role, small GTPase required for proper localization of RNA polymerase II (RNAPII). May act at an RNAP assembly step prior to nuclear import. The sequence is that of GPN-loop GTPase 3 from Homo sapiens (Human).